The sequence spans 1355 residues: Phosphoribosylformylglycinamidine synthase (1355 aa).

Residues 326-337 (GAETGTGGRLRD) and 406-408 (IGF) contribute to the ATP site. Mg(2+)-binding residues include Glu743, Asn747, and Asp911. Ser913 is a binding site for ATP. The 239-residue stretch at 1087–1325 (KVAVIREEGS…LSWQWPFMPE (239 aa)) folds into the Glutamine amidotransferase type-1 domain. The active-site Nucleophile is the Cys1182. Residues His1310 and Glu1312 contribute to the active site.

It in the N-terminal section; belongs to the FGAMS family.

Its subcellular location is the cytoplasm. The enzyme catalyses N(2)-formyl-N(1)-(5-phospho-beta-D-ribosyl)glycinamide + L-glutamine + ATP + H2O = 2-formamido-N(1)-(5-O-phospho-beta-D-ribosyl)acetamidine + L-glutamate + ADP + phosphate + H(+). Its pathway is purine metabolism; IMP biosynthesis via de novo pathway; 5-amino-1-(5-phospho-D-ribosyl)imidazole from N(2)-formyl-N(1)-(5-phospho-D-ribosyl)glycinamide: step 1/2. Phosphoribosylformylglycinamidine synthase involved in the purines biosynthetic pathway. Catalyzes the ATP-dependent conversion of formylglycinamide ribonucleotide (FGAR) and glutamine to yield formylglycinamidine ribonucleotide (FGAM) and glutamate. The protein is Phosphoribosylformylglycinamidine synthase (purL) of Dictyostelium discoideum (Social amoeba).